Consider the following 190-residue polypeptide: LIM domain-containing protein WLIM1 (190 aa).

Ala-2 carries the N-acetylalanine modification. Residues 8–68 enclose the LIM zinc-binding 1 domain; sequence QKCMACDKTV…RPHFDQNFKR (61 aa). The tract at residues 74–98 is disordered; it reads KSFEGTPKIGKPDRPLEGERPAGTK. Positions 83–95 are enriched in basic and acidic residues; the sequence is GKPDRPLEGERPA. The LIM zinc-binding 2 domain occupies 108–168; the sequence is EKCVGCDKTV…KHHHIQLIKE (61 aa).

As to quaternary structure, interacts with F-actin. As to expression, expressed in roots, leaves, stems, flowers and siliques. Not detected in pollen.

It is found in the cytoplasm. The protein resides in the cytoskeleton. Binds to actin filaments and promotes cross-linking into thick bundles. Has an actin-stabilizing activity. The actin regulatory activities are not regulated by pH and [Ca(2+)]. This chain is LIM domain-containing protein WLIM1, found in Arabidopsis thaliana (Mouse-ear cress).